The primary structure comprises 72 residues: DNA-directed RNA polymerase subunit omega (72 aa).

The protein belongs to the RNA polymerase subunit omega family. The RNAP catalytic core consists of 2 alpha, 1 beta, 1 beta' and 1 omega subunit. When a sigma factor is associated with the core the holoenzyme is formed, which can initiate transcription.

It carries out the reaction RNA(n) + a ribonucleoside 5'-triphosphate = RNA(n+1) + diphosphate. In terms of biological role, promotes RNA polymerase assembly. Latches the N- and C-terminal regions of the beta' subunit thereby facilitating its interaction with the beta and alpha subunits. The polypeptide is DNA-directed RNA polymerase subunit omega (Francisella philomiragia subsp. philomiragia (strain ATCC 25017 / CCUG 19701 / FSC 153 / O#319-036)).